Consider the following 253-residue polypeptide: Complement C1q subcomponent subunit B (253 aa).

The signal sequence occupies residues 1–25 (MKTQWSEILTPLLLLLLGLLHVSWA). Gln-26 bears the Pyrrolidone carboxylic acid mark. Residues 29–112 (CTGSPGIPGV…GPRGPKGGSG (84 aa)) form the Collagen-like domain. The disordered stretch occupies residues 29 to 114 (CTGSPGIPGV…RGPKGGSGDY (86 aa)). Residues Pro-33, Pro-36, Pro-39, Pro-51, and Pro-54 each carry the 4-hydroxyproline modification. 2 positions are modified to 5-hydroxylysine: Lys-57 and Lys-60. 4-hydroxyproline is present on Pro-63. Residues 68–77 (DHGELGEKGD) show a composition bias toward basic and acidic residues. 5-hydroxylysine is present on Lys-75. A compositionally biased stretch (low complexity) spans 78-96 (AGIPGIPGKVGPKGPVGPK). 2 positions are modified to 4-hydroxyproline: Pro-81 and Pro-84. Residues Lys-90 and Lys-96 each carry the 5-hydroxylysine modification. Pro-99 and Pro-102 each carry 4-hydroxyproline. Lys-108 bears the 5-hydroxylysine mark. The region spanning 115–253 (KATQKVAFSA…GFLLFPDMDV (139 aa)) is the C1q domain. The cysteines at positions 179 and 198 are disulfide-linked. Residues Asp-199, Tyr-200, and Gln-206 each coordinate Ca(2+).

Core component of the complement C1 complex, a calcium-dependent complex composed of 1 molecule of the C1Q subcomplex, 2 molecules of C1R and 2 molecules of C1S. The C1Q subcomplex is composed 18 subunits: 3 chains of C1QA, C1QB, and C1QC trimerize to form 6 collagen-like triple helices connected to six globular ligand-recognition modules (C1q domain). Post-translationally, hydroxylated on lysine and proline residues. Hydroxylated lysine residues can be glycosylated. Human C1Q contains up to 68.3 hydroxylysine-galactosylglucose residues and up to 2.5 hydroxylysine-galactose per molecule. Total percentage hydroxylysine residues glycosylated is 86.4%. In terms of tissue distribution, highest levels in spleen, lung and brain. Weaker expression in kidney and liver. In the spleen, localized mainly to the red pulp, in cells mainly of monocyte-macrophage lineage. In white pulp, localized in specific dendritic cells such as those from the periarteriolar lymphatic sheath (PALS).

The protein resides in the secreted. It localises to the cell surface. The C1Q subcomplex is inhibited by sulfated molecules, such as triterpenoid sulfates, heparan sulfate, or chondroitin sulfates. In terms of biological role, core component of the complement C1 complex, a multiprotein complex that initiates the classical pathway of the complement system, a cascade of proteins that leads to phagocytosis and breakdown of pathogens and signaling that strengthens the adaptive immune system. The classical complement pathway is initiated by the C1Q subcomplex of the C1 complex, which specifically binds IgG or IgM immunoglobulins complexed with antigens, forming antigen-antibody complexes on the surface of pathogens: C1QA, together with C1QB and C1QC, specifically recognizes and binds the Fc regions of IgG or IgM via its C1q domain. Immunoglobulin-binding activates the proenzyme C1R, which cleaves C1S, initiating the proteolytic cascade of the complement system. The C1Q subcomplex is activated by a hexamer of IgG complexed with antigens, while it is activated by a pentameric IgM. The C1Q subcomplex also recognizes and binds phosphatidylserine exposed on the surface of cells undergoing programmed cell death, possibly promoting activation of the complement system. This Rattus norvegicus (Rat) protein is Complement C1q subcomponent subunit B.